The primary structure comprises 99 residues: Ribonuclease P protein component 1 (99 aa).

This sequence belongs to the eukaryotic/archaeal RNase P protein component 1 family. In terms of assembly, consists of a catalytic RNA component and at least 4-5 protein subunits.

It localises to the cytoplasm. It carries out the reaction Endonucleolytic cleavage of RNA, removing 5'-extranucleotides from tRNA precursor.. Part of ribonuclease P, a protein complex that generates mature tRNA molecules by cleaving their 5'-ends. In Methanococcus vannielii, this protein is Ribonuclease P protein component 1.